The primary structure comprises 577 residues: Arginine--tRNA ligase (577 aa).

A 'HIGH' region motif is present at residues 123 to 133; the sequence is PNLAKEMHVGH.

The protein belongs to the class-I aminoacyl-tRNA synthetase family. As to quaternary structure, monomer.

The protein resides in the cytoplasm. It catalyses the reaction tRNA(Arg) + L-arginine + ATP = L-arginyl-tRNA(Arg) + AMP + diphosphate. In Marinomonas sp. (strain MWYL1), this protein is Arginine--tRNA ligase.